The sequence spans 230 residues: uncharacterized protein (230 aa).

Belongs to the transferase hexapeptide repeat family.

This is an uncharacterized protein from Escherichia coli (strain K12).